We begin with the raw amino-acid sequence, 837 residues long: Espin (837 aa).

ANK repeat units lie at residues 1–31, 35–66, 69–99, 103–132, 137–167, 171–201, 205–235, 238–267, and 270–299; these read MALE…GPSL, LDAL…AVSR, NGAT…RVQE, SGAT…ANSA, TGAL…GVNA, NGAT…DPHL, DGMT…SFEQ, DGAT…EISQ, and WGGT…GLDV. Residues Ser-337 and Ser-341 each carry the phosphoserine modification. Over residues 339-348 the composition is skewed to basic and acidic residues; it reads DPSMDLEAKQ. 4 disordered regions span residues 339 to 459, 477 to 712, 745 to 767, and 785 to 816; these read DPSM…VGLH, DSLK…PATL, KLQQ…EARL, and EREQ…TLGY. A compositionally biased stretch (polar residues) spans 351–364; sequence SGMSSPNTTMSVQP. Low complexity predominate over residues 376 to 395; it reads LSNYDSCSSSHSSSKGQRST. Ser-400 and Ser-401 each carry phosphoserine. A compositionally biased stretch (pro residues) spans 423-455; sequence SLPPPPPPSFPPPPPPGTQLPPPPPGYPAPNPP. Phosphoserine is present on residues Ser-497, Ser-504, and Ser-531. Residues 581-604 show a composition bias toward pro residues; the sequence is LPPPPPPPPLPEALSSPPPAPPLP. Residues 617 to 626 are compositionally biased toward low complexity; that stretch reads SSSSTGSTKS. 2 stretches are compositionally biased toward polar residues: residues 627–636 and 651–662; these read FNMMSPTGDN and PTPQSKGLTTVF. Ser-631 carries the post-translational modification Phosphoserine. The WH2 domain maps to 635-652; sequence DNSELLAEIKAGKSLKPT. Low complexity predominate over residues 663–673; that stretch reads SGSGQPASQPE. Phosphoserine occurs at positions 670, 674, and 680. A coiled-coil region spans residues 738-814; that stretch reads KRQVMVRKLQ…KEQSEKLRTL (77 aa).

Monomer. Interacts with PFN2. Binds F-actin in a Ca(2+)-resistant fashion. Interacts (via N-terminal) with BAIAP2 (via SH3-domain). Interacts with MYO3A (via C-terminus). Interacts with MYO3B (via C-terminus). As to expression, expressed at high concentration in the microvillar parallel actin bundle (PAB) of hair cells stereocilia in the cochlea and vestibular system. Detected also at high levels of a number of other sensory cell types, including taste receptor cells, solitary chemoreceptor cells, vomeronasal sensory neurons and Merkel cells. Isoform 1 is detected in testis. Isoforms 2 is detected in small intestine and kidney (at protein level). Isoforms 3, 4, 6 and 8 are expressed in Purkinje cells dendritic spines.

The protein resides in the cytoplasm. It is found in the cytoskeleton. The protein localises to the cell projection. It localises to the stereocilium. Its subcellular location is the microvillus. The protein resides in the cell junction. It is found in the dendritic spine. Multifunctional actin-bundling protein. Plays a major role in regulating the organization, dimension, dynamics and signaling capacities of the actin filament-rich microvilli in the mechanosensory and chemosensory cells. Required for the assembly and stabilization of the stereociliary parallel actin bundles. Plays a crucial role in the formation and maintenance of inner ear hair cell stereocilia. Involved in the elongation of actin in stereocilia. In extrastriolar hair cells, required for targeting MYO3B to stereocilia tips, and for regulation of stereocilia diameter and staircase formation. The chain is Espin (Espn) from Rattus norvegicus (Rat).